The chain runs to 422 residues: UDP-N-acetylglucosamine 1-carboxyvinyltransferase (422 aa).

22-23 is a phosphoenolpyruvate binding site; sequence KN. Residue Arg-93 coordinates UDP-N-acetyl-alpha-D-glucosamine. Cys-117 (proton donor) is an active-site residue. Cys-117 carries the 2-(S-cysteinyl)pyruvic acid O-phosphothioketal modification. UDP-N-acetyl-alpha-D-glucosamine contacts are provided by residues 122 to 126, Asp-308, and Leu-330; that span reads RPVDL.

It belongs to the EPSP synthase family. MurA subfamily.

It localises to the cytoplasm. It carries out the reaction phosphoenolpyruvate + UDP-N-acetyl-alpha-D-glucosamine = UDP-N-acetyl-3-O-(1-carboxyvinyl)-alpha-D-glucosamine + phosphate. The protein operates within cell wall biogenesis; peptidoglycan biosynthesis. Its function is as follows. Cell wall formation. Adds enolpyruvyl to UDP-N-acetylglucosamine. This chain is UDP-N-acetylglucosamine 1-carboxyvinyltransferase, found in Helicobacter pylori (strain P12).